A 212-amino-acid chain; its full sequence is Protein Thf1 (212 aa).

Residues 179–201 are a coiled coil; that stretch reads ERMEQAVELMQETLAADRRKKEK.

This sequence belongs to the THF1 family.

May be involved in photosynthetic membrane biogenesis. The sequence is that of Protein Thf1 from Parasynechococcus marenigrum (strain WH8102).